We begin with the raw amino-acid sequence, 274 residues long: Undecaprenyl-diphosphatase (274 aa).

A run of 8 helical transmembrane segments spans residues leucine 4–isoleucine 24, valine 46–valine 66, isoleucine 86–isoleucine 106, valine 109–tryptophan 129, isoleucine 145–threonine 165, phenylalanine 188–alanine 208, isoleucine 214–valine 234, and phenylalanine 250–isoleucine 270.

This sequence belongs to the UppP family.

It is found in the cell inner membrane. The catalysed reaction is di-trans,octa-cis-undecaprenyl diphosphate + H2O = di-trans,octa-cis-undecaprenyl phosphate + phosphate + H(+). Catalyzes the dephosphorylation of undecaprenyl diphosphate (UPP). Confers resistance to bacitracin. This chain is Undecaprenyl-diphosphatase, found in Cellvibrio japonicus (strain Ueda107) (Pseudomonas fluorescens subsp. cellulosa).